The following is a 327-amino-acid chain: Ribose-phosphate pyrophosphokinase (327 aa).

51–53 (DGE) is a binding site for ATP. Residues H144 and D183 each contribute to the Mg(2+) site. Residue K207 is part of the active site. D-ribose 5-phosphate is bound by residues R209, D233, and 237–241 (DTGGT).

Belongs to the ribose-phosphate pyrophosphokinase family. Class I subfamily. Homohexamer. It depends on Mg(2+) as a cofactor.

The protein localises to the cytoplasm. The enzyme catalyses D-ribose 5-phosphate + ATP = 5-phospho-alpha-D-ribose 1-diphosphate + AMP + H(+). The protein operates within metabolic intermediate biosynthesis; 5-phospho-alpha-D-ribose 1-diphosphate biosynthesis; 5-phospho-alpha-D-ribose 1-diphosphate from D-ribose 5-phosphate (route I): step 1/1. Involved in the biosynthesis of the central metabolite phospho-alpha-D-ribosyl-1-pyrophosphate (PRPP) via the transfer of pyrophosphoryl group from ATP to 1-hydroxyl of ribose-5-phosphate (Rib-5-P). This Prochlorococcus marinus (strain SARG / CCMP1375 / SS120) protein is Ribose-phosphate pyrophosphokinase.